Consider the following 321-residue polypeptide: Aspartate carbamoyltransferase catalytic subunit (321 aa).

Arg57 and Thr58 together coordinate carbamoyl phosphate. Residue Lys85 coordinates L-aspartate. Residues Arg107, His142, and Gln145 each contribute to the carbamoyl phosphate site. Residues Arg175 and Arg229 each contribute to the L-aspartate site. Carbamoyl phosphate-binding residues include Gly270 and Pro271.

It belongs to the aspartate/ornithine carbamoyltransferase superfamily. ATCase family. In terms of assembly, heterododecamer (2C3:3R2) of six catalytic PyrB chains organized as two trimers (C3), and six regulatory PyrI chains organized as three dimers (R2).

The catalysed reaction is carbamoyl phosphate + L-aspartate = N-carbamoyl-L-aspartate + phosphate + H(+). It functions in the pathway pyrimidine metabolism; UMP biosynthesis via de novo pathway; (S)-dihydroorotate from bicarbonate: step 2/3. Functionally, catalyzes the condensation of carbamoyl phosphate and aspartate to form carbamoyl aspartate and inorganic phosphate, the committed step in the de novo pyrimidine nucleotide biosynthesis pathway. The polypeptide is Aspartate carbamoyltransferase catalytic subunit (Mycobacterium leprae (strain TN)).